The following is a 268-amino-acid chain: Tryptophan synthase alpha chain (268 aa).

Catalysis depends on proton acceptor residues Glu-49 and Asp-60.

It belongs to the TrpA family. In terms of assembly, tetramer of two alpha and two beta chains.

It carries out the reaction (1S,2R)-1-C-(indol-3-yl)glycerol 3-phosphate + L-serine = D-glyceraldehyde 3-phosphate + L-tryptophan + H2O. It participates in amino-acid biosynthesis; L-tryptophan biosynthesis; L-tryptophan from chorismate: step 5/5. Its function is as follows. The alpha subunit is responsible for the aldol cleavage of indoleglycerol phosphate to indole and glyceraldehyde 3-phosphate. This is Tryptophan synthase alpha chain from Edwardsiella ictaluri (strain 93-146).